Consider the following 388-residue polypeptide: Ribonucleoside-diphosphate reductase subunit beta (388 aa).

The Fe cation site is built by aspartate 84, glutamate 115, and histidine 118. The active site involves tyrosine 122. The Fe cation site is built by glutamate 212, glutamate 247, and histidine 250.

It belongs to the ribonucleoside diphosphate reductase small chain family. Heterodimer of a large and a small subunit. Requires Fe cation as cofactor.

It carries out the reaction a 2'-deoxyribonucleoside 5'-diphosphate + [thioredoxin]-disulfide + H2O = a ribonucleoside 5'-diphosphate + [thioredoxin]-dithiol. Functionally, provides the precursors necessary for DNA synthesis. Catalyzes the biosynthesis of deoxyribonucleotides from the corresponding ribonucleotides. This is Ribonucleoside-diphosphate reductase subunit beta (NRDB) from Escherichia coli (Bacteriophage T4).